Consider the following 485-residue polypeptide: Protein nucleotidyltransferase YdiU (485 aa).

Residues Gly90, Gly92, Arg93, Lys113, Asp125, Gly126, Arg176, and Arg183 each coordinate ATP. Asp252 serves as the catalytic Proton acceptor. Asn253 and Asp262 together coordinate Mg(2+). An ATP-binding site is contributed by Asp262.

Belongs to the SELO family. Requires Mg(2+) as cofactor. Mn(2+) serves as cofactor.

The enzyme catalyses L-seryl-[protein] + ATP = 3-O-(5'-adenylyl)-L-seryl-[protein] + diphosphate. It carries out the reaction L-threonyl-[protein] + ATP = 3-O-(5'-adenylyl)-L-threonyl-[protein] + diphosphate. The catalysed reaction is L-tyrosyl-[protein] + ATP = O-(5'-adenylyl)-L-tyrosyl-[protein] + diphosphate. It catalyses the reaction L-histidyl-[protein] + UTP = N(tele)-(5'-uridylyl)-L-histidyl-[protein] + diphosphate. The enzyme catalyses L-seryl-[protein] + UTP = O-(5'-uridylyl)-L-seryl-[protein] + diphosphate. It carries out the reaction L-tyrosyl-[protein] + UTP = O-(5'-uridylyl)-L-tyrosyl-[protein] + diphosphate. In terms of biological role, nucleotidyltransferase involved in the post-translational modification of proteins. It can catalyze the addition of adenosine monophosphate (AMP) or uridine monophosphate (UMP) to a protein, resulting in modifications known as AMPylation and UMPylation. In Aliivibrio salmonicida (strain LFI1238) (Vibrio salmonicida (strain LFI1238)), this protein is Protein nucleotidyltransferase YdiU.